We begin with the raw amino-acid sequence, 200 residues long: Protein GrpE (200 aa).

Basic and acidic residues predominate over residues 1–27; the sequence is MTKQEKAENQEKPTEETVEETPKKETP. Residues 1–50 form a disordered region; it reads MTKQEKAENQEKPTEETVEETPKKETPFEPVMEADEVEETTEAQAPVEEA. Positions 32–41 are enriched in acidic residues; that stretch reads MEADEVEETT.

The protein belongs to the GrpE family. In terms of assembly, homodimer.

The protein localises to the cytoplasm. Functionally, participates actively in the response to hyperosmotic and heat shock by preventing the aggregation of stress-denatured proteins, in association with DnaK and GrpE. It is the nucleotide exchange factor for DnaK and may function as a thermosensor. Unfolded proteins bind initially to DnaJ; upon interaction with the DnaJ-bound protein, DnaK hydrolyzes its bound ATP, resulting in the formation of a stable complex. GrpE releases ADP from DnaK; ATP binding to DnaK triggers the release of the substrate protein, thus completing the reaction cycle. Several rounds of ATP-dependent interactions between DnaJ, DnaK and GrpE are required for fully efficient folding. In Latilactobacillus sakei subsp. sakei (strain 23K) (Lactobacillus sakei subsp. sakei), this protein is Protein GrpE.